The chain runs to 849 residues: Probable receptor-like protein kinase At1g30570 (849 aa).

The first 28 residues, 1–28 (MSKLRKKYLEHLLCVLIFFTYVIGYGEA), serve as a signal peptide directing secretion. The Extracellular segment spans residues 29 to 429 (QSKSFLVDCG…GHSVSDSKMR (401 aa)). Asn-40, Asn-57, Asn-94, Asn-122, Asn-158, Asn-268, Asn-271, Asn-305, and Asn-343 each carry an N-linked (GlcNAc...) asparagine glycan. Residues 430-450 (IIWISVGAGIAIIIFFVFLGI) form a helical membrane-spanning segment. Over 451 to 849 (LVVCLCKKRR…QTGSALHNSA (399 aa)) the chain is Cytoplasmic. The Protein kinase domain maps to 520–793 (FDDGLAIGVG…GEVLWSLEYV (274 aa)). ATP-binding positions include 526–534 (IGVGGFGKV) and Lys-548. Asp-644 acts as the Proton acceptor in catalysis. The segment at 810–849 (FSSSQAVEEAPESFTLPACSNQDSSETEQSQTGSALHNSA) is disordered. A compositionally biased stretch (polar residues) spans 827–849 (ACSNQDSSETEQSQTGSALHNSA).

It belongs to the protein kinase superfamily. Ser/Thr protein kinase family.

The protein localises to the cell membrane. In Arabidopsis thaliana (Mouse-ear cress), this protein is Probable receptor-like protein kinase At1g30570.